The chain runs to 250 residues: Ribosomal RNA small subunit methyltransferase J (250 aa).

S-adenosyl-L-methionine contacts are provided by residues arginine 101–aspartate 102, glutamate 117–arginine 118, serine 153–serine 154, and aspartate 171.

Belongs to the methyltransferase superfamily. RsmJ family.

The protein resides in the cytoplasm. It catalyses the reaction guanosine(1516) in 16S rRNA + S-adenosyl-L-methionine = N(2)-methylguanosine(1516) in 16S rRNA + S-adenosyl-L-homocysteine + H(+). Its function is as follows. Specifically methylates the guanosine in position 1516 of 16S rRNA. The polypeptide is Ribosomal RNA small subunit methyltransferase J (Shigella dysenteriae serotype 1 (strain Sd197)).